The sequence spans 475 residues: MDAYNNPSAVESGDAAVKSVDDDGREKRTGTFWTASAHIITAVIGSGVLSLAWAIAQLGWVAGTTVLVAFAIITYYTSTLLADCYRSPDSITGTRNYNYMGVVRSYLGGKKVQLCGVAQYVNLVGVTIGYTITASISLVAIGKSNCYHDKGHKAKCSVSNYPYMAAFGIVQIILSQLPNFHKLSFLSIIAAVMSFSYASIGIGLAIATVASGKIGKTELTGTVIGVDVTASEKVWKLFQAIGDIAFSYAFTTILIEIQDTLRSSPPENKVMKRASLVGVSTTTVFYILCGCIGYAAFGNQAPGDFLTDFGFYEPYWLIDFANACIALHLIGAYQVYAQPFFQFVEENCNKKWPQSNFINKEYSSKVPLLGKCRVNLFRLVWRTCYVVLTTFVAMIFPFFNAILGLLGAFAFWPLTVYFPVAMHIAQAKVKKYSRRWLALNLLVLVCLIVSALAAVGSIIGLINSVKSYKPFKNLD.

Residues M1–D22 are disordered. The Cytoplasmic segment spans residues M1–T31. 2 consecutive transmembrane segments (helical) span residues F32 to A52 and W53 to I73. Residues T74–Y120 lie on the Cytoplasmic side of the membrane. A helical transmembrane segment spans residues V121–I141. The Extracellular segment spans residues G142–S157. The chain crosses the membrane as a helical span at residues V158–P178. The Cytoplasmic segment spans residues N179–F185. A helical transmembrane segment spans residues L186–I206. Residues A207–K236 are Extracellular-facing. The chain crosses the membrane as a helical span at residues L237–I257. At Q258–L276 the chain is on the cytoplasmic side. The chain crosses the membrane as a helical span at residues V277–F297. The Extracellular portion of the chain corresponds to G298 to P314. A helical transmembrane segment spans residues Y315 to V335. Residues Y336–R378 are Cytoplasmic-facing. Residues L379–F398 form a helical membrane-spanning segment. The Extracellular segment spans residues F399–A401. The chain crosses the membrane as a helical span at residues I402–I424. The Cytoplasmic segment spans residues A425–L441. Residues L442–I462 traverse the membrane as a helical segment. Residues N463–D475 lie on the Extracellular side of the membrane.

The protein belongs to the amino acid/polyamine transporter 2 family. Amino acid/auxin permease (AAAP) (TC 2.A.18.2) subfamily. In terms of tissue distribution, expressed in flower buds, siliques, developing seeds and funiculi.

It is found in the cell membrane. In terms of biological role, amino acid-proton symporter. Stereospecific transporter with a broad specificity for glutamate, aspartate and neutral and acidic amino acids. The sequence is that of Amino acid permease 8 (AAP8) from Arabidopsis thaliana (Mouse-ear cress).